Consider the following 2344-residue polypeptide: Mucin-4 (2344 aa).

Positions 1–30 (MRGPHGVSWRVPWLCLSCLCSCLLLLPVNT) are cleaved as a signal peptide. The segment covering 32 to 46 (TTSAPKTSTALPSST) has biased composition (low complexity). Disordered regions lie at residues 32-760 (TTSA…QGSI), 773-1036 (QKMS…TTST), 1072-1130 (VPSL…TPSV), 1171-1197 (STVA…MGAS), and 1233-1269 (SGLT…TVPP). The segment covering 47–100 (NPSQMTSQVSNPTASSYRMTKNTGQASPMVTSSSITTLPQSQHTGSMKTTRNPQ) has biased composition (polar residues). The segment at 81–1006 (ITTLPQSQHT…VSTLVTSTQE (926 aa)) is variable number of tandem repeats (VNTR). Composition is skewed to low complexity over residues 101–116 (TTGT…ASSS) and 123–137 (TTSQ…TTTS). O-linked (GalNAc...) threonine glycosylation is present at Thr133. Positions 142–225 (ESSSPPSTSV…GGMKTTRNPQ (84 aa)) are enriched in polar residues. Positions 226–273 (TTGTTEVTTTLSASSSDHPTSSPESTPGNTAPRTTETSTTTTTKVLMT) are enriched in low complexity. Positions 274–305 (SLQQKLPTGSTLGTSTQELTTLPQSQHTGIMK) are enriched in polar residues. Low complexity-rich tracts occupy residues 306–322 (TTSR…TTRT) and 335–349 (TSSQ…TTTS). Residues 373–436 (SGDTGHTMAV…GMKTTRNPQR (64 aa)) show a composition bias toward polar residues. O-linked (GalNAc...) threonine glycans are attached at residues Thr391 and Thr392. Residues 437 to 446 (TTPTEVTTST) show a composition bias toward low complexity. Residues 447-468 (LSASSSDQVQVETTSRATLSPD) show a composition bias toward polar residues. The span at 469 to 492 (TTTTSHAPSVSSSSPSPPSTEGTS) shows a compositional bias: low complexity. An O-linked (GalNAc...) threonine glycan is attached at Thr470. An O-linked (GalNAc...) serine glycan is attached at Ser479. The segment covering 493-509 (VDTGLTTAVTTQDSTPA) has biased composition (polar residues). Positions 510–546 (TTQGSLTSSSQTLSTVSPLSTSTQETSTQELTSSQSQ) are enriched in low complexity. A compositionally biased stretch (polar residues) spans 547-580 (HTGSMKTTHNPQTTRNTEVTTTLSASSSDQVQVE). Low complexity predominate over residues 581–594 (TTSQTTLSDATTTS). Over residues 599–682 (ESSSPPSTSD…GGMKTTRNPQ (84 aa)) the composition is skewed to polar residues. Composition is skewed to low complexity over residues 683–698 (TTGT…ASSS) and 705–719 (TSSQ…TTTS). Polar residues-rich tracts occupy residues 724 to 760 (ESSS…QGSI) and 773 to 807 (QKMS…SSRP). The segment covering 808–828 (QTTSVTSTLSSSPSGSTPVQT) has biased composition (low complexity). Residues 829–868 (RSVTSSSDERTNPTSSGVSNTSPATTEVLTPTSSPESTPG) show a composition bias toward polar residues. The span at 869–915 (NTAPRTTETSTTTTTKVLMTSLQQKLPTGSTLGTSTPTEVTTTLSAS) shows a compositional bias: low complexity. A compositionally biased stretch (polar residues) spans 916-994 (SSDQVQVETT…ISVTPSTQKM (79 aa)). Low complexity predominate over residues 995 to 1015 (STVSTLVTSTQELTSSQSQRT). Residues 1016 to 1026 (GSMGTSSKPQA) show a composition bias toward polar residues. Residues 1027–1036 (TTPTEVTTST) are compositionally biased toward low complexity. Residues 1072 to 1083 (VPSLMHSSKPQA) are compositionally biased toward polar residues. The span at 1084 to 1096 (TTPTEVTTSTLSS) shows a compositional bias: low complexity. A compositionally biased stretch (polar residues) spans 1097–1116 (FSRGSTQTQTVSWETSSSGK). Composition is skewed to low complexity over residues 1118 to 1130 (TAPS…TPSV), 1175 to 1188 (HRQS…HSQS), and 1233 to 1267 (SGLT…RSTV). The NIDO domain maps to 1332–1492 (GHSGVMLISL…TGYTGRCGPT (161 aa)). A disordered region spans residues 1574–1597 (GRHRTGLAAGTTSPLSASSTSSGG). Residues 1580–1597 (LAAGTTSPLSASSTSSGG) show a composition bias toward low complexity. Residues 1609–1804 (RPAWTFGDPH…HYGMTSETNG (196 aa)) enclose the VWFD domain. N-linked (GlcNAc...) asparagine glycosylation is found at Asn1644, Asn1660, Asn1672, Asn1689, Asn1698, Asn1704, Asn1715, Asn1724, Asn1759, Asn1780, Asn1787, Asn1829, Asn1874, Asn1926, Asn1951, Asn1974, Asn1981, Asn2029, and Asn2048. The region spanning 2047-2086 (QNHSCPVNYCYNHGHCDISGPPDCQPTCTCAPAFTGNRCF) is the EGF-like 1 domain. Intrachain disulfides connect Cys2051/Cys2062, Cys2056/Cys2074, and Cys2076/Cys2085. 2 N-linked (GlcNAc...) asparagine glycosylation sites follow: Asn2114 and Asn2121. A helical membrane pass occupies residues 2173 to 2193 (GPLIHYLNNQLISAVMEAFLL). Asn2227 carries an N-linked (GlcNAc...) asparagine glycan. The EGF-like 2 domain maps to 2256–2295 (VSPCSEGYCHNGGQCKHLPDGPQCTCATFSIYTSWGERCE). 3 cysteine pairs are disulfide-bonded: Cys2259–Cys2270, Cys2264–Cys2279, and Cys2281–Cys2294. A helical transmembrane segment spans residues 2301–2321 (LGAFFGILFGALGALLLLAIL).

In terms of assembly, a heterodimeric complex, composed of a mucin-4 alpha chain and a cysteine-rich transmembrane mucin-4 beta chain. Mucin-4 beta chain interacts with ERBB2 via the EGF-like domain 1. In nonpolarized cells, associates with ERBB2 and ERBB3. Proteolytically cleaved into 2 subunits, mucin-4 alpha chain and mucin-4 beta chain. Post-translationally, mucin-4 alpha subunit is highly O-glycosylated. In terms of processing, mucin-4 beta subunit is predominantly N-glycosylated. Expression is developmentally regulated in the mammary gland, dramatically increases in the lactating gland compared with the virgin mammary gland, while decreasing again during mammary gland involution. Expressed in 13762 ascites cells. Overexpressed in some aggressive mammary tumors. Overexpression seems to block cell-cell and cell-matrix interactions to protect tumor cells from immune surveillance, and to promote metastasis.

It is found in the cell membrane. It localises to the secreted. Functionally, membrane-bound mucin, a family of highly glycosylated proteins that constitute the major component of the mucus, the slimy and viscous secretion covering epithelial surfaces. These glycoproteins play important roles in the protection of the epithelium and are implicated in epithelial renewal and differentiation. Regulates cellular behavior through both anti-adhesive effects on cell-cell and cell-extracellular matrix interactions and its ability to act as an intramembrane ligand for ERBB2. Plays an important role in proliferation and differentiation of epithelial cells by inducing specific phosphorylation of ERBB2. In polarized epithelial cells, segregates ERBB2 and other ERBB receptors and prevents ERBB2 from acting as a coreceptor. The interaction with ERBB2 leads to enhanced expression of CDKN1B. The formation of a MUC4-ERBB2-ERBB3-NRG1 complex leads to down-regulation of CDKN1B, resulting in repression of apoptosis and stimulation of proliferation. Its ability to promote tumor growth may be mainly due to repression of apoptosis as opposed to proliferation. This chain is Mucin-4 (Muc4), found in Rattus norvegicus (Rat).